The chain runs to 444 residues: Tubulin beta chain (444 aa).

Residues Gln11, Glu69, Ser138, Gly142, Thr143, Gly144, Asn204, and Asn226 each contribute to the GTP site. Glu69 contributes to the Mg(2+) binding site.

The protein belongs to the tubulin family. Dimer of alpha and beta chains. A typical microtubule is a hollow water-filled tube with an outer diameter of 25 nm and an inner diameter of 15 nM. Alpha-beta heterodimers associate head-to-tail to form protofilaments running lengthwise along the microtubule wall with the beta-tubulin subunit facing the microtubule plus end conferring a structural polarity. Microtubules usually have 13 protofilaments but different protofilament numbers can be found in some organisms and specialized cells. Mg(2+) serves as cofactor.

Its subcellular location is the cytoplasm. The protein resides in the cytoskeleton. Functionally, tubulin is the major constituent of microtubules, a cylinder consisting of laterally associated linear protofilaments composed of alpha- and beta-tubulin heterodimers. Microtubules grow by the addition of GTP-tubulin dimers to the microtubule end, where a stabilizing cap forms. Below the cap, tubulin dimers are in GDP-bound state, owing to GTPase activity of alpha-tubulin. The polypeptide is Tubulin beta chain (Phytophthora cinnamomi (Cinnamon fungus)).